Here is a 403-residue protein sequence, read N- to C-terminus: MSNLSSKLFRGNLVIRIAIGLVLGVLLAFISPEWAKSVGVLGQFFVKSLRAIAPILVFVLVLSAIANKEVGTDAKLKPILVMYVLGTFLAALTAVVFSFIFPTRLELVSSPGDLTPPQGIGEIIKTVVFNLVDNPLQALANANFIGILAWAIGLGIPLRYAAPSTKIFLNDLSEAVSYVVKMVISVAPIGVFGLVAETIATNGMNAFIGYARLLGVLLGAMMTVIFVLDPILVYWKIRRNPYPLTFICLRESGLTAFFTRSSAANIPVNMNLAKRLGVRDEIASVAIPLGATINMAGAAITVTVLTLAAAYTQGIYPDFMTALLLSIVASICACGASGVSGGSLLLIPLACSLFNIPNDIAAQVIGVGFIIGVIQDSAETALNSSTDVLFTTAVSQAEDRKES.

Transmembrane regions (helical) follow at residues 11-31 (GNLV…AFIS), 51-71 (AIAP…KEVG), 81-101 (VMYV…SFIF), 138-158 (ALAN…GIPL), 175-195 (AVSY…FGLV), 213-233 (LLGV…PILV), 285-305 (VAIP…VTVL), and 319-339 (FMTA…ASGV).

The protein belongs to the dicarboxylate/amino acid:cation symporter (DAACS) (TC 2.A.23) family.

It is found in the cell inner membrane. It carries out the reaction L-serine(in) + Na(+)(in) = L-serine(out) + Na(+)(out). The enzyme catalyses L-threonine(in) + Na(+)(in) = L-threonine(out) + Na(+)(out). Its function is as follows. Involved in the import of serine and threonine into the cell, with the concomitant import of sodium (symport system). The chain is Serine/threonine transporter SstT from Haemophilus ducreyi (strain 35000HP / ATCC 700724).